The following is a 306-amino-acid chain: D-alanine--D-alanine ligase (306 aa).

The region spanning 101-300 (KVVMAAAGIP…FGELVTWMVE (200 aa)) is the ATP-grasp domain. An ATP-binding site is contributed by 128 to 182 (LPPPYVLKPNTGGSSVGVFIVKEDQPHPPQELFRADWTFGESLMAEPFIKGLELT). Mg(2+)-binding residues include Asp-250, Glu-267, and Asn-269.

Belongs to the D-alanine--D-alanine ligase family. The cofactor is Mg(2+). It depends on Mn(2+) as a cofactor.

The protein localises to the cytoplasm. The catalysed reaction is 2 D-alanine + ATP = D-alanyl-D-alanine + ADP + phosphate + H(+). It participates in cell wall biogenesis; peptidoglycan biosynthesis. Its function is as follows. Cell wall formation. This chain is D-alanine--D-alanine ligase, found in Azorhizobium caulinodans (strain ATCC 43989 / DSM 5975 / JCM 20966 / LMG 6465 / NBRC 14845 / NCIMB 13405 / ORS 571).